The sequence spans 309 residues: DnaJ homolog subfamily B member 7 (309 aa).

The J domain maps to 3-69; the sequence is DYYEVLGLQR…EKRDIYDKYG (67 aa). Residues 282 to 309 are disordered; it reads FSAGVKEGGKRKKKKRKEVQKKSTKRNC. The span at 290-309 shows a compositional bias: basic residues; sequence GKRKKKKRKEVQKKSTKRNC.

In terms of biological role, probably acts as a co-chaperone. The sequence is that of DnaJ homolog subfamily B member 7 (DNAJB7) from Homo sapiens (Human).